A 224-amino-acid polypeptide reads, in one-letter code: Lipoprotein-releasing system ATP-binding protein LolD (224 aa).

The ABC transporter domain maps to 5–224 (LEILDVSKCY…SLSGGMLTEL (220 aa)). Residue 40–47 (GSSGSGKS) coordinates ATP.

The protein belongs to the ABC transporter superfamily. Lipoprotein translocase (TC 3.A.1.125) family. As to quaternary structure, the complex is composed of two ATP-binding proteins (LolD) and two transmembrane proteins (LolC and LolE).

The protein localises to the cell inner membrane. Functionally, part of the ABC transporter complex LolCDE involved in the translocation of mature outer membrane-directed lipoproteins, from the inner membrane to the periplasmic chaperone, LolA. Responsible for the formation of the LolA-lipoprotein complex in an ATP-dependent manner. This Anaplasma marginale (strain St. Maries) protein is Lipoprotein-releasing system ATP-binding protein LolD.